The primary structure comprises 265 residues: MKPAMETAAEENTEQSQERKGCFECCIKCLGGVPYASLVATILCFSGVALFCGCGHVALAGTVAILEQHFSTNTSDHALLSEVIQLMQYVIYGIASFFFLYGIILLAEGFYTTSAVKELHGEFKTTACGRCISGMFVFLTYVLGVAWLGVFGFSAVPVFMFYNIWSTCEVIKSPQSNGTSGVEQICVDVRQYGIIPWNAFPGKICGSALENICNTNEFYMSYHLFIVACAGAGATVIALLIYMMATTYNYAVLKFKSREDCCPKF.

The chain crosses the membrane as a helical span at residues 31–51 (GGVPYASLVATILCFSGVALF). N-linked (GlcNAc...) asparagine glycosylation is present at N73. Helical transmembrane passes span 90–110 (VIYG…AEGF) and 136–156 (FVFL…FSAV). An N-linked (GlcNAc...) asparagine glycan is attached at N177. A helical membrane pass occupies residues 224 to 244 (LFIVACAGAGATVIALLIYMM). S257 bears the Phosphoserine mark.

The protein belongs to the myelin proteolipid protein family. In terms of assembly, interacts with SERT. In terms of tissue distribution, highly expressed in the ventral medullary surface, moderately in the cerebral cortex and cerebellum, poorly in lung and kidney, and not at all in heart, skeletal muscle, liver, stomach or stomach.

Its subcellular location is the membrane. The protein localises to the cell membrane. Its function is as follows. May be involved in neural development. Involved in regulation of osteoblast function and bone formation. Involved in matrix vesicle release by osteoblasts; this function seems to involve maintenance of the actin cytoskeleton. May be involved in cellular trafficking of SERT and thereby in regulation of serotonin uptake. This Rattus norvegicus (Rat) protein is Neuronal membrane glycoprotein M6-b (Gpm6b).